The primary structure comprises 240 residues: UDP-2,3-diacylglucosamine hydrolase (240 aa).

Aspartate 8, histidine 10, aspartate 41, asparagine 79, and histidine 114 together coordinate Mn(2+). 79–80 (NR) provides a ligand contact to substrate. Substrate contacts are provided by aspartate 122, serine 160, asparagine 164, lysine 167, and histidine 195. Residues histidine 195 and histidine 197 each contribute to the Mn(2+) site.

The protein belongs to the LpxH family. Requires Mn(2+) as cofactor.

The protein resides in the cell inner membrane. The enzyme catalyses UDP-2-N,3-O-bis[(3R)-3-hydroxytetradecanoyl]-alpha-D-glucosamine + H2O = 2-N,3-O-bis[(3R)-3-hydroxytetradecanoyl]-alpha-D-glucosaminyl 1-phosphate + UMP + 2 H(+). It functions in the pathway glycolipid biosynthesis; lipid IV(A) biosynthesis; lipid IV(A) from (3R)-3-hydroxytetradecanoyl-[acyl-carrier-protein] and UDP-N-acetyl-alpha-D-glucosamine: step 4/6. Its function is as follows. Hydrolyzes the pyrophosphate bond of UDP-2,3-diacylglucosamine to yield 2,3-diacylglucosamine 1-phosphate (lipid X) and UMP by catalyzing the attack of water at the alpha-P atom. Involved in the biosynthesis of lipid A, a phosphorylated glycolipid that anchors the lipopolysaccharide to the outer membrane of the cell. The sequence is that of UDP-2,3-diacylglucosamine hydrolase from Escherichia coli (strain UTI89 / UPEC).